The following is a 363-amino-acid chain: D-alanine--D-alanine ligase (363 aa).

The ATP-grasp domain occupies 148 to 353; that stretch reads KKLLAAEGLP…YGTLVSTLIE (206 aa). 176-231 is a binding site for ATP; sequence RERLGLPVFVKPARAGSSIGITKVDDWAALDTAIAAAREHDPKVIVEAGIVGREVE. Residues Asp-308, Glu-320, and Asn-322 each coordinate Mg(2+).

Belongs to the D-alanine--D-alanine ligase family. It depends on Mg(2+) as a cofactor. Requires Mn(2+) as cofactor.

It localises to the cytoplasm. It carries out the reaction 2 D-alanine + ATP = D-alanyl-D-alanine + ADP + phosphate + H(+). It functions in the pathway cell wall biogenesis; peptidoglycan biosynthesis. Its function is as follows. Cell wall formation. This chain is D-alanine--D-alanine ligase, found in Nocardia farcinica (strain IFM 10152).